Here is a 417-residue protein sequence, read N- to C-terminus: Serine hydroxymethyltransferase (417 aa).

Residues leucine 121 and 125–127 contribute to the (6S)-5,6,7,8-tetrahydrofolate site; that span reads GHL. Lysine 229 bears the N6-(pyridoxal phosphate)lysine mark. (6S)-5,6,7,8-tetrahydrofolate is bound at residue 355 to 357; that stretch reads SPF.

The protein belongs to the SHMT family. As to quaternary structure, homodimer. Pyridoxal 5'-phosphate serves as cofactor.

It is found in the cytoplasm. It catalyses the reaction (6R)-5,10-methylene-5,6,7,8-tetrahydrofolate + glycine + H2O = (6S)-5,6,7,8-tetrahydrofolate + L-serine. Its pathway is one-carbon metabolism; tetrahydrofolate interconversion. The protein operates within amino-acid biosynthesis; glycine biosynthesis; glycine from L-serine: step 1/1. In terms of biological role, catalyzes the reversible interconversion of serine and glycine with tetrahydrofolate (THF) serving as the one-carbon carrier. This reaction serves as the major source of one-carbon groups required for the biosynthesis of purines, thymidylate, methionine, and other important biomolecules. Also exhibits THF-independent aldolase activity toward beta-hydroxyamino acids, producing glycine and aldehydes, via a retro-aldol mechanism. The chain is Serine hydroxymethyltransferase from Shewanella baltica (strain OS195).